A 661-amino-acid chain; its full sequence is Heme transporter BhuA (661 aa).

Positions methionine 1–alanine 23 are cleaved as a signal peptide. One can recognise a TBDR plug domain in the interval lysine 48–valine 159. Positions threonine 170–phenylalanine 661 constitute a TBDR beta-barrel domain.

Belongs to the TonB-dependent receptor family.

The protein localises to the cell outer membrane. In terms of biological role, heme transporter playing an important role in stationary-phase iron acquisition and required for maintenance of chronic infection in mice. This is Heme transporter BhuA (bhuA) from Brucella abortus (strain 2308).